The sequence spans 235 residues: Proteasome subunit alpha (235 aa).

Belongs to the peptidase T1A family. The 20S proteasome core is composed of 14 alpha and 14 beta subunits that assemble into four stacked heptameric rings, resulting in a barrel-shaped structure. The two inner rings, each composed of seven catalytic beta subunits, are sandwiched by two outer rings, each composed of seven alpha subunits. The catalytic chamber with the active sites is on the inside of the barrel. Has a gated structure, the ends of the cylinder being occluded by the N-termini of the alpha-subunits. Is capped by the proteasome-associated ATPase, ARC.

Its subcellular location is the cytoplasm. It functions in the pathway protein degradation; proteasomal Pup-dependent pathway. With respect to regulation, the formation of the proteasomal ATPase ARC-20S proteasome complex, likely via the docking of the C-termini of ARC into the intersubunit pockets in the alpha-rings, may trigger opening of the gate for substrate entry. Interconversion between the open-gate and close-gate conformations leads to a dynamic regulation of the 20S proteasome proteolysis activity. Its function is as follows. Component of the proteasome core, a large protease complex with broad specificity involved in protein degradation. The protein is Proteasome subunit alpha of Arthrobacter sp. (strain FB24).